The chain runs to 93 residues: Pyrimidine/purine nucleoside phosphorylase (93 aa).

Belongs to the nucleoside phosphorylase PpnP family.

It catalyses the reaction a purine D-ribonucleoside + phosphate = a purine nucleobase + alpha-D-ribose 1-phosphate. It carries out the reaction adenosine + phosphate = alpha-D-ribose 1-phosphate + adenine. The enzyme catalyses cytidine + phosphate = cytosine + alpha-D-ribose 1-phosphate. The catalysed reaction is guanosine + phosphate = alpha-D-ribose 1-phosphate + guanine. It catalyses the reaction inosine + phosphate = alpha-D-ribose 1-phosphate + hypoxanthine. It carries out the reaction thymidine + phosphate = 2-deoxy-alpha-D-ribose 1-phosphate + thymine. The enzyme catalyses uridine + phosphate = alpha-D-ribose 1-phosphate + uracil. The catalysed reaction is xanthosine + phosphate = alpha-D-ribose 1-phosphate + xanthine. Catalyzes the phosphorolysis of diverse nucleosides, yielding D-ribose 1-phosphate and the respective free bases. Can use uridine, adenosine, guanosine, cytidine, thymidine, inosine and xanthosine as substrates. Also catalyzes the reverse reactions. The protein is Pyrimidine/purine nucleoside phosphorylase of Sorangium cellulosum (strain So ce56) (Polyangium cellulosum (strain So ce56)).